A 396-amino-acid chain; its full sequence is Elongation factor Tu (396 aa).

The region spanning 10-206 (KPHVNVGTIG…AVDAYIPTPQ (197 aa)) is the tr-type G domain. Residues 19–26 (GHVDHGKT) form a G1 region. GTP is bound at residue 19–26 (GHVDHGKT). Residue T26 coordinates Mg(2+). The segment at 60-64 (GITIA) is G2. The tract at residues 81 to 84 (DCPG) is G3. GTP is bound by residues 81–85 (DCPGH) and 136–139 (NKVD). The G4 stretch occupies residues 136–139 (NKVD). Residues 174–176 (SAL) form a G5 region.

Belongs to the TRAFAC class translation factor GTPase superfamily. Classic translation factor GTPase family. EF-Tu/EF-1A subfamily. As to quaternary structure, monomer.

Its subcellular location is the cytoplasm. The enzyme catalyses GTP + H2O = GDP + phosphate + H(+). In terms of biological role, GTP hydrolase that promotes the GTP-dependent binding of aminoacyl-tRNA to the A-site of ribosomes during protein biosynthesis. The chain is Elongation factor Tu from Anaeromyxobacter dehalogenans (strain 2CP-C).